A 133-amino-acid chain; its full sequence is Small ribosomal subunit protein uS8 (133 aa).

The tract at residues 1-28 is disordered; sequence MANHDPISDMLTRIRNASEKRHEKTKVP. Residues 16-26 are compositionally biased toward basic and acidic residues; that stretch reads NASEKRHEKTK.

The protein belongs to the universal ribosomal protein uS8 family. Part of the 30S ribosomal subunit. Contacts proteins S5 and S12.

Its function is as follows. One of the primary rRNA binding proteins, it binds directly to 16S rRNA central domain where it helps coordinate assembly of the platform of the 30S subunit. This Prochlorococcus marinus (strain NATL1A) protein is Small ribosomal subunit protein uS8.